A 236-amino-acid chain; its full sequence is Orotidine 5'-phosphate decarboxylase (236 aa).

Substrate-binding positions include Asp-13, Lys-35, 62–71 (DLKFYDIPQT), Thr-123, Arg-184, Gln-193, Gly-213, and Arg-214. Residue Lys-64 is the Proton donor of the active site.

Belongs to the OMP decarboxylase family. Type 1 subfamily. Homodimer.

The enzyme catalyses orotidine 5'-phosphate + H(+) = UMP + CO2. Its pathway is pyrimidine metabolism; UMP biosynthesis via de novo pathway; UMP from orotate: step 2/2. Functionally, catalyzes the decarboxylation of orotidine 5'-monophosphate (OMP) to uridine 5'-monophosphate (UMP). This chain is Orotidine 5'-phosphate decarboxylase, found in Coxiella burnetii (strain CbuK_Q154) (Coxiella burnetii (strain Q154)).